Here is a 637-residue protein sequence, read N- to C-terminus: Biosynthetic arginine decarboxylase (637 aa).

Position 101 is an N6-(pyridoxal phosphate)lysine (K101). 286–296 (FDVGGGLAVDY) is a substrate binding site.

This sequence belongs to the Orn/Lys/Arg decarboxylase class-II family. SpeA subfamily. Mg(2+) serves as cofactor. Requires pyridoxal 5'-phosphate as cofactor.

It catalyses the reaction L-arginine + H(+) = agmatine + CO2. It functions in the pathway amine and polyamine biosynthesis; agmatine biosynthesis; agmatine from L-arginine: step 1/1. In terms of biological role, catalyzes the biosynthesis of agmatine from arginine. This is Biosynthetic arginine decarboxylase from Shewanella putrefaciens (strain CN-32 / ATCC BAA-453).